Here is a 70-residue protein sequence, read N- to C-terminus: Melittin (70 aa).

Positions 1-21 (MKFLVNVALVFMVVYISYIYA) are cleaved as a signal peptide. Positions 22-43 (APEPEPAPEPEAEADAEADPEA) are cleaved as a propeptide — removed by a dipeptidylpeptidase. Residue glycine 44 is modified to N-formylglycine; partial. The residue at position 69 (glutamine 69) is a Glutamine amide.

This sequence belongs to the melittin family. As to quaternary structure, monomer (in solution and for integration into membranes), homotetramer (in solution and potentially as a toroidal pore in membranes), and potenially homomultimer (as a toroidal pore in membranes). In terms of tissue distribution, expressed by the venom gland.

Its subcellular location is the secreted. It localises to the target cell membrane. Its function is as follows. Melittin: Main toxin of bee venom with strong antimicrobial activity and hemolytic activity. It has enhancing effects on bee venom phospholipase A2 activity. This amphipathic toxin binds to negatively charged membrane surface and forms pore by inserting into lipid bilayers inducing the leakage of ions and molecules and the enhancement of permeability that ultimately leads to cell lysis. It acts as a voltage-gated pore with higher selectivity for anions over cations. The ion conductance has been shown to be voltage-dependent. Self-association of melittin in membranes is promoted by high ionic strength, but not by the presence of negatively charged lipids. In vivo, intradermal injection into healthy human volunteers produce sharp pain sensation and an inflammatory response. It produces pain by activating primary nociceptor cells directly and indirectly due to its ability to activate plasma membrane phospholipase A2 and its pore-forming activity. In the context of inflammation and cancer tests, is highly cytotoxic to normal cells, highly induces calcium signaling and almost completely prevents cAMP production. In addition, prevents LPS-induced nitric oxid (NO) synthesis but does not affect the IP3 signaling and pro-inflammatory activation of endothelial cells. Also shows significant antiproliferative activity on the breast cancer cell line MDA-MB-231. Melittin-S: 1.4-fold less hemolytic and adopts a less organized secondary structure than melittin. In terms of biological role, melittin-2: Has strong hemolytic activity. The polypeptide is Melittin (MELT) (Apis mellifera (Honeybee)).